Consider the following 403-residue polypeptide: Large ribosomal subunit protein uL3 (403 aa).

Residues 1–37 (MSHRKFSAPRHGSLGFLPRKRSSRHRGKVKSFPKDDP) are disordered. S13 is modified (phosphoserine). The segment covering 18 to 31 (PRKRSSRHRGKVKS) has biased composition (basic residues). A Glycyl lysine isopeptide (Lys-Gly) (interchain with G-Cter in SUMO2) cross-link involves residue K39. The residue at position 136 (K136) is an N6-acetyllysine. Glycyl lysine isopeptide (Lys-Gly) (interchain with G-Cter in SUMO2) cross-links involve residues K224 and K226. Residue H245 is modified to Tele-methylhistidine. N6-acetyllysine; alternate occurs at positions 286 and 294. A Glycyl lysine isopeptide (Lys-Gly) (interchain with G-Cter in SUMO2); alternate cross-link involves residue K286. A Glycyl lysine isopeptide (Lys-Gly) (interchain with G-Cter in SUMO1); alternate cross-link involves residue K294. S304 carries the post-translational modification Phosphoserine. K366 is modified (N6-acetyllysine; alternate). Residue K366 forms a Glycyl lysine isopeptide (Lys-Gly) (interchain with G-Cter in SUMO2); alternate linkage. N6-acetyllysine is present on K373. Glycyl lysine isopeptide (Lys-Gly) (interchain with G-Cter in SUMO2) cross-links involve residues K386, K393, and K399.

Belongs to the universal ribosomal protein uL3 family. Component of the large ribosomal subunit. Interacts with DHX33. Post-translationally, constitutively monomethylated at His-245 by METTL18. Methylation at His-245 regulates translation elongation by slowing ribosome traversal on tyrosine codons: slower elongation provides enough time for proper folding of synthesized proteins and prevents cellular aggregation of tyrosine-rich proteins. It is not required for incorporation of RPL3 into ribosomes.

The protein localises to the nucleus. Its subcellular location is the nucleolus. It is found in the cytoplasm. Component of the large ribosomal subunit. The ribosome is a large ribonucleoprotein complex responsible for the synthesis of proteins in the cell. In Homo sapiens (Human), this protein is Large ribosomal subunit protein uL3 (RPL3).